Here is a 308-residue protein sequence, read N- to C-terminus: Ribosomal protein L11 methyltransferase (308 aa).

4 residues coordinate S-adenosyl-L-methionine: Thr148, Gly169, Asp191, and Asn239.

The protein belongs to the methyltransferase superfamily. PrmA family.

The protein localises to the cytoplasm. The catalysed reaction is L-lysyl-[protein] + 3 S-adenosyl-L-methionine = N(6),N(6),N(6)-trimethyl-L-lysyl-[protein] + 3 S-adenosyl-L-homocysteine + 3 H(+). Methylates ribosomal protein L11. The chain is Ribosomal protein L11 methyltransferase from Psychrobacter arcticus (strain DSM 17307 / VKM B-2377 / 273-4).